The chain runs to 194 residues: 7-methyl-GTP pyrophosphatase (194 aa).

D70 functions as the Proton acceptor in the catalytic mechanism.

The protein belongs to the Maf family. YceF subfamily. Requires a divalent metal cation as cofactor.

It is found in the cytoplasm. The enzyme catalyses N(7)-methyl-GTP + H2O = N(7)-methyl-GMP + diphosphate + H(+). Functionally, nucleoside triphosphate pyrophosphatase that hydrolyzes 7-methyl-GTP (m(7)GTP). May have a dual role in cell division arrest and in preventing the incorporation of modified nucleotides into cellular nucleic acids. The chain is 7-methyl-GTP pyrophosphatase from Ralstonia nicotianae (strain ATCC BAA-1114 / GMI1000) (Ralstonia solanacearum).